A 596-amino-acid polypeptide reads, in one-letter code: Elongation factor 4 (596 aa).

A tr-type G domain is found at 2 to 184; it reads KHIRNFSIIA…VIVEQIPPPE (183 aa). GTP is bound by residues 14-19 and 131-134; these read DHGKST and NKID.

It belongs to the TRAFAC class translation factor GTPase superfamily. Classic translation factor GTPase family. LepA subfamily.

Its subcellular location is the cell inner membrane. The catalysed reaction is GTP + H2O = GDP + phosphate + H(+). Functionally, required for accurate and efficient protein synthesis under certain stress conditions. May act as a fidelity factor of the translation reaction, by catalyzing a one-codon backward translocation of tRNAs on improperly translocated ribosomes. Back-translocation proceeds from a post-translocation (POST) complex to a pre-translocation (PRE) complex, thus giving elongation factor G a second chance to translocate the tRNAs correctly. Binds to ribosomes in a GTP-dependent manner. The sequence is that of Elongation factor 4 from Shewanella piezotolerans (strain WP3 / JCM 13877).